Here is a 370-residue protein sequence, read N- to C-terminus: Biotin synthase (370 aa).

The Radical SAM core domain occupies 56-283; it reads NAVQVSTLLS…KSHVRLSAGR (228 aa). Residues cysteine 71, cysteine 75, and cysteine 78 each contribute to the [4Fe-4S] cluster site. Positions 115, 146, 206, and 278 each coordinate [2Fe-2S] cluster. A compositionally biased stretch (basic and acidic residues) spans 327-344; it reads GLHPEPSDPHADDAHRDD. The tract at residues 327 to 346 is disordered; that stretch reads GLHPEPSDPHADDAHRDDEQ.

Belongs to the radical SAM superfamily. Biotin synthase family. Homodimer. It depends on [4Fe-4S] cluster as a cofactor. [2Fe-2S] cluster is required as a cofactor.

It catalyses the reaction (4R,5S)-dethiobiotin + (sulfur carrier)-SH + 2 reduced [2Fe-2S]-[ferredoxin] + 2 S-adenosyl-L-methionine = (sulfur carrier)-H + biotin + 2 5'-deoxyadenosine + 2 L-methionine + 2 oxidized [2Fe-2S]-[ferredoxin]. The protein operates within cofactor biosynthesis; biotin biosynthesis; biotin from 7,8-diaminononanoate: step 2/2. Its function is as follows. Catalyzes the conversion of dethiobiotin (DTB) to biotin by the insertion of a sulfur atom into dethiobiotin via a radical-based mechanism. This is Biotin synthase from Chromohalobacter salexigens (strain ATCC BAA-138 / DSM 3043 / CIP 106854 / NCIMB 13768 / 1H11).